The sequence spans 180 residues: Urease accessory protein UreE (180 aa).

The disordered stretch occupies residues 71-90 (AAPSGAGHGDGEQDGTGAPG).

This sequence belongs to the UreE family.

It is found in the cytoplasm. Its function is as follows. Involved in urease metallocenter assembly. Binds nickel. Probably functions as a nickel donor during metallocenter assembly. This chain is Urease accessory protein UreE, found in Kocuria rhizophila (strain ATCC 9341 / DSM 348 / NBRC 103217 / DC2201).